Reading from the N-terminus, the 60-residue chain is Homeobox protein EgHBX4 (60 aa).

Residues S1–E60 constitute a DNA-binding region (homeobox).

The protein belongs to the paired homeobox family. Bicoid subfamily.

Its subcellular location is the nucleus. The sequence is that of Homeobox protein EgHBX4 (HBX4) from Echinococcus granulosus (Hydatid tapeworm).